Consider the following 1487-residue polypeptide: Murinoglobulin-1 (1487 aa).

The first 24 residues, 1 to 24 (MKKNREAQLCLFSALLAFLPFASL), serve as a signal peptide directing secretion. Cys-48 and Cys-86 are disulfide-bonded. Asn-55 and Asn-247 each carry an N-linked (GlcNAc...) asparagine glycan. 2 disulfides stabilise this stretch: Cys-251–Cys-283 and Cys-269–Cys-295. Residues Asn-301, Asn-321, Asn-393, and Asn-508 are each glycosylated (N-linked (GlcNAc...) asparagine). Disulfide bonds link Cys-468-Cys-563, Cys-595-Cys-784, and Cys-643-Cys-689. The tract at residues 686-745 (PTYCYEMNMVVLSAPAVESELSPRGGEFEMMPLGVNKSPLPKEPPRKDPPPKDPVIETIR) is bait region. Residues Asn-760, Asn-787, and Asn-882 are each glycosylated (N-linked (GlcNAc...) asparagine). Cystine bridges form between Cys-860–Cys-896, Cys-934–Cys-1334, Cys-1092–Cys-1140, and Cys-1365–Cys-1480. The isoglutamyl cysteine thioester (Cys-Gln) cross-link spans 985–988 (CGEQ). Residue Asn-1004 is glycosylated (N-linked (GlcNAc...) asparagine). 3 N-linked (GlcNAc...) asparagine glycosylation sites follow: Asn-1153, Asn-1324, and Asn-1437.

This sequence belongs to the protease inhibitor I39 (alpha-2-macroglobulin) family. Monomer. As to expression, plasma.

It localises to the secreted. In terms of biological role, a proteinase activates the inhibitor by specific proteolysis in the bait region, which, by an unknown mechanism leads to reaction at the cysteinyl-glutamyl internal thiol ester site and to a conformational change, whereby the proteinase is trapped and/or covalently bound to the inhibitor. While in the tetrameric proteinase inhibitors steric inhibition is sufficiently strong, monomeric forms need a covalent linkage between the activated glutamyl residue of the original thiol ester and a terminal amino group of a lysine or another nucleophilic group on the proteinase, for inhibition to be effective. This chain is Murinoglobulin-1, found in Rattus norvegicus (Rat).